Here is a 270-residue protein sequence, read N- to C-terminus: A-type potassium channel modulatory protein KCNIP2 (270 aa).

Residues 1–17 (MRGQGRKESLSDSRDLD) are compositionally biased toward basic and acidic residues. Residues 1–33 (MRGQGRKESLSDSRDLDGSYDQLTGHPPGPTKK) are disordered. Ser9 is subject to Phosphoserine. Residues Cys45 and Cys46 are each lipidated (S-palmitoyl cysteine). Positions 81–137 (FELSTVCHRPEGLEQLQEQTKFTRKELQVLYRGFKNECPSGIVNEENFKQIYSQFFP) constitute an EF-hand 1; degenerate domain. EF-hand domains follow at residues 140–175 (DSST…ILRG), 176–211 (TIDD…IYDM), and 224–259 (APRE…DENI). Positions 153, 155, 157, 159, 164, 189, 191, 193, 195, 200, 237, 239, 241, and 248 each coordinate Ca(2+). Residues 257-270 (ENIMRSMQLFDNVI) are interaction with KCND2.

It belongs to the recoverin family. Component of heteromultimeric potassium channels. Identified in potassium channel complexes containing KCND1, KCND2, KCND3, KCNIP1, KCNIP2, KCNIP3, KCNIP4, DPP6 and DPP10. The KCND2-KCNIP2 channel complex contains four KCND2 and four KCNIP2 subunits. Interacts with KCND2. Probably part of a complex consisting of KCNIP1, KCNIP2 isoform 3 and KCND2. At least isoform 2 and isoform 3 can self-associate to form homodimers and homotetramers. Isoform 3 interacts with KCNIP1 in a calcium-dependent manner. Interacts with KCND3; each KCNIP2 monomer interacts with two adjacent KCND3 subunits, through both the N-terminal inactivation ball of a KCND3 subunit and a C-terminal helix from the adjacent KCND3 subunit, clamping them together; this interaction modulates the channel gating kinetics. In terms of processing, palmitoylated. Palmitoylation enhances association with the plasma membrane. In terms of tissue distribution, expressed in heart ventricle with isoform 1 as most prominent form.

Its subcellular location is the cell membrane. Functionally, regulatory subunit of Kv4/D (Shal)-type voltage-gated rapidly inactivating A-type potassium channels. Modulates channel density, inactivation kinetics and rate of recovery from inactivation in a calcium-dependent and isoform-specific manner. Involved in KCND2 and KCND3 trafficking to the cell surface. May be required for the expression of I(To) currents in the heart. The chain is A-type potassium channel modulatory protein KCNIP2 from Mustela putorius furo (European domestic ferret).